Consider the following 207-residue polypeptide: MARYIGPKCKLSRREGTDLQLKSGVKPFDVKTKKHAKAPGQHGQARGKQSEYSLQLREKQKVRRMYGVLERQFSNYYKEAARVKGATGENLLKLLESRLDNVVYRMGFGSTRAEARQLVSHRSITLNGRRVNIASIQVKAGDVIAVHEGAKQQLRIKNAIELAAQRGIPAWMDVDHSKLEGTFKAAPDRSDLPAEINESLIVELYSK.

A disordered region spans residues 26–53; it reads KPFDVKTKKHAKAPGQHGQARGKQSEYS. The region spanning 97–159 is the S4 RNA-binding domain; it reads SRLDNVVYRM…AKQQLRIKNA (63 aa).

The protein belongs to the universal ribosomal protein uS4 family. As to quaternary structure, part of the 30S ribosomal subunit. Contacts protein S5. The interaction surface between S4 and S5 is involved in control of translational fidelity.

Functionally, one of the primary rRNA binding proteins, it binds directly to 16S rRNA where it nucleates assembly of the body of the 30S subunit. Its function is as follows. With S5 and S12 plays an important role in translational accuracy. The polypeptide is Small ribosomal subunit protein uS4 (Acinetobacter baylyi (strain ATCC 33305 / BD413 / ADP1)).